A 441-amino-acid chain; its full sequence is N-succinylarginine dihydrolase (441 aa).

Residues 19-28 (AGLSFGNEAS), Asn-110, and 137-138 (HR) each bind substrate. Residue Glu-174 is part of the active site. Arg-212 serves as a coordination point for substrate. Residue His-248 is part of the active site. The substrate site is built by Asp-250 and Asn-359. The active-site Nucleophile is Cys-365.

This sequence belongs to the succinylarginine dihydrolase family. In terms of assembly, homodimer.

The catalysed reaction is N(2)-succinyl-L-arginine + 2 H2O + 2 H(+) = N(2)-succinyl-L-ornithine + 2 NH4(+) + CO2. It participates in amino-acid degradation; L-arginine degradation via AST pathway; L-glutamate and succinate from L-arginine: step 2/5. Catalyzes the hydrolysis of N(2)-succinylarginine into N(2)-succinylornithine, ammonia and CO(2). In Cronobacter sakazakii (strain ATCC BAA-894) (Enterobacter sakazakii), this protein is N-succinylarginine dihydrolase.